The following is a 120-amino-acid chain: Ribosome-binding factor A (120 aa).

Belongs to the RbfA family. As to quaternary structure, monomer. Binds 30S ribosomal subunits, but not 50S ribosomal subunits or 70S ribosomes.

Its subcellular location is the cytoplasm. Its function is as follows. One of several proteins that assist in the late maturation steps of the functional core of the 30S ribosomal subunit. Associates with free 30S ribosomal subunits (but not with 30S subunits that are part of 70S ribosomes or polysomes). Required for efficient processing of 16S rRNA. May interact with the 5'-terminal helix region of 16S rRNA. The protein is Ribosome-binding factor A of Borreliella burgdorferi (strain ATCC 35210 / DSM 4680 / CIP 102532 / B31) (Borrelia burgdorferi).